The following is a 266-amino-acid chain: Tryptophan synthase alpha chain (266 aa).

Catalysis depends on proton acceptor residues E49 and D60.

This sequence belongs to the TrpA family. As to quaternary structure, tetramer of two alpha and two beta chains.

The enzyme catalyses (1S,2R)-1-C-(indol-3-yl)glycerol 3-phosphate + L-serine = D-glyceraldehyde 3-phosphate + L-tryptophan + H2O. The protein operates within amino-acid biosynthesis; L-tryptophan biosynthesis; L-tryptophan from chorismate: step 5/5. The alpha subunit is responsible for the aldol cleavage of indoleglycerol phosphate to indole and glyceraldehyde 3-phosphate. In Trichormus variabilis (strain ATCC 29413 / PCC 7937) (Anabaena variabilis), this protein is Tryptophan synthase alpha chain.